The primary structure comprises 306 residues: Elongation factor Ts (306 aa).

Residues 80–83 (TDFV) form an involved in Mg(2+) ion dislocation from EF-Tu region.

This sequence belongs to the EF-Ts family.

The protein resides in the cytoplasm. Functionally, associates with the EF-Tu.GDP complex and induces the exchange of GDP to GTP. It remains bound to the aminoacyl-tRNA.EF-Tu.GTP complex up to the GTP hydrolysis stage on the ribosome. This is Elongation factor Ts from Clostridium acetobutylicum (strain ATCC 824 / DSM 792 / JCM 1419 / IAM 19013 / LMG 5710 / NBRC 13948 / NRRL B-527 / VKM B-1787 / 2291 / W).